The sequence spans 239 residues: Myogenic factor 6 (239 aa).

Residues 28–64 (HLDMSGVSPLYNGNDSPLSPGQDNVPSETGGESSGDE) form a disordered region. Over residues 38-58 (YNGNDSPLSPGQDNVPSETGG) the composition is skewed to polar residues. A bHLH domain is found at 96–147 (DRRKAATLRERRRLKKINEAFDALKRKTVANPNQRLPKVEILRSAISYIERL). Residues 155–189 (DEQERSQSGASDTRNDKEQNRPSGGDYRWKKASNT) are disordered.

In terms of assembly, efficient DNA binding requires dimerization with another bHLH protein.

The protein localises to the nucleus. Involved in muscle differentiation (myogenic factor). Induces fibroblasts to differentiate into myoblasts. Probable sequence specific DNA-binding protein. The chain is Myogenic factor 6 (myf6) from Takifugu rubripes (Japanese pufferfish).